Here is a 314-residue protein sequence, read N- to C-terminus: Olfactory receptor 5P66 (314 aa).

Topologically, residues 1–28 (MAFLENGNHTAVSEFILLGLTDDPVLRI) are extracellular. Residue N8 is glycosylated (N-linked (GlcNAc...) asparagine). Residues 29–49 (VLFTIILCIYLVTVSGNLSTI) traverse the membrane as a helical segment. The Cytoplasmic portion of the chain corresponds to 50 to 57 (LLIRVSSQ). Residues 58–78 (LHHPMYFFLSHLASADIGLSS) form a helical membrane-spanning segment. The Extracellular segment spans residues 79-102 (SVTPNMLVNFLVERSTISYLGCGI). A disulfide bridge connects residues C100 and C192. Residues 103-123 (QLSSAALFGATECFLLAAMAY) form a helical membrane-spanning segment. Topologically, residues 124 to 136 (DRFMAICNPLLYS) are cytoplasmic. Residues 137 to 157 (TKMSTKVCVQLIVGSYIAGFL) form a helical membrane-spanning segment. The Extracellular segment spans residues 158–199 (NASSFLLSFFSLLFCGQNIINDFFCDFAPLAELSCSDVSVFV). Residues 200 to 220 (VVISFSAGTVTMLTVFVIAIS) form a helical membrane-spanning segment. Topologically, residues 221–240 (YSYILITILKMRSTEGRQKA) are cytoplasmic. Residues 241–261 (FSTCTSHLTAVTLFYGTVTFI) traverse the membrane as a helical segment. Residues 262-274 (YVMPKSSYSMDQN) lie on the Extracellular side of the membrane. A helical transmembrane segment spans residues 275–295 (KIISVFYMVVVPMLNPLIYSL). The Cytoplasmic segment spans residues 296-314 (RNNEIKGALKRHFDRKTFS).

Belongs to the G-protein coupled receptor 1 family.

Its subcellular location is the cell membrane. Functionally, potential odorant receptor. The chain is Olfactory receptor 5P66 from Mus musculus (Mouse).